We begin with the raw amino-acid sequence, 528 residues long: Na(+)/H(+) antiporter NhaB (528 aa).

11 helical membrane passes run 10 to 30, 63 to 83, 96 to 116, 131 to 165, 204 to 224, 240 to 260, 305 to 325, 359 to 379, 391 to 411, 449 to 469, and 476 to 496; these read IGNFLGNSPKWYKIAILSFLI, YPLQPGGLLAIEAVAIGMTSA, VLLLLVFMVAGIYFMKQLLLF, VSLMFCLTSAFLSAFLDALTVIAVIIAVAVGFYAI, LLMHAGVGTALGGVCTMVGEP, FVIRMSPVTVPVLIAGILTCL, VLVGVWLIAGLALHLASVGLV, LAVFFAVVAVIIDQHLFAPVI, LVIFYIANGLLSMVSDNVFVG, ATPNGQAAFLFLLTSALAPLI, and MVWMALPYTIVLSVVGVLAIE.

It belongs to the NhaB Na(+)/H(+) (TC 2.A.34) antiporter family.

Its subcellular location is the cell inner membrane. The enzyme catalyses 2 Na(+)(in) + 3 H(+)(out) = 2 Na(+)(out) + 3 H(+)(in). Functionally, na(+)/H(+) antiporter that extrudes sodium in exchange for external protons. The sequence is that of Na(+)/H(+) antiporter NhaB from Shewanella putrefaciens (strain CN-32 / ATCC BAA-453).